A 173-amino-acid chain; its full sequence is Sporulation-specific protein 12 (173 aa).

The span at 1–12 (MSNKASDQSART) shows a compositional bias: polar residues. Positions 1–56 (MSNKASDQSARTASILKTDITRENTITRSSSSNNDNYHHHNNINNYNESAKTGEDA) are disordered. Position 2 is an N-acetylserine (serine 2). Phosphoserine occurs at positions 118 and 125. The tract at residues 159–173 (DSEDVEIDEDEEYFY) is negative-charged tail.

Functionally, it is required for meiosis I chromosome division during sporulation. A component of the FEAR (CDC14 early anaphase release) network which promotes CDC14 release from the nucleolus during early anaphase. In Saccharomyces cerevisiae (strain ATCC 204508 / S288c) (Baker's yeast), this protein is Sporulation-specific protein 12 (SPO12).